A 212-amino-acid polypeptide reads, in one-letter code: MLANYTRSAKALSALLQREGVEDTQVLDAIAQIPRHIFVGDVLQHKAYQNTALPIGQGQTISQPYIVARMTELLQLAGVRDKVLEIGTGSGYQTAILAKIFTKVYSVERIKALQWQAKRRLHQLDLYNVAMKHGDGWQGWESQAPFNGIIVTAAAAKIPQDLLAQLADGGVLLAPIGEQEQKLTMVIRNGNNYTEHVIAPVRFVPLVAGDIE.

Ser-62 is an active-site residue.

Belongs to the methyltransferase superfamily. L-isoaspartyl/D-aspartyl protein methyltransferase family.

The protein resides in the cytoplasm. It carries out the reaction [protein]-L-isoaspartate + S-adenosyl-L-methionine = [protein]-L-isoaspartate alpha-methyl ester + S-adenosyl-L-homocysteine. In terms of biological role, catalyzes the methyl esterification of L-isoaspartyl residues in peptides and proteins that result from spontaneous decomposition of normal L-aspartyl and L-asparaginyl residues. It plays a role in the repair and/or degradation of damaged proteins. This chain is Protein-L-isoaspartate O-methyltransferase, found in Pseudoalteromonas translucida (strain TAC 125).